Here is a 761-residue protein sequence, read N- to C-terminus: Xaa-Pro dipeptidyl-peptidase (761 aa).

Residues S347, D467, and H497 each act as charge relay system in the active site.

It belongs to the peptidase S15 family. In terms of assembly, homodimer.

It localises to the cytoplasm. It carries out the reaction Hydrolyzes Xaa-Pro-|- bonds to release unblocked, N-terminal dipeptides from substrates including Ala-Pro-|-p-nitroanilide and (sequentially) Tyr-Pro-|-Phe-Pro-|-Gly-Pro-|-Ile.. Functionally, removes N-terminal dipeptides sequentially from polypeptides having unsubstituted N-termini provided that the penultimate residue is proline. The polypeptide is Xaa-Pro dipeptidyl-peptidase (Streptococcus agalactiae serotype V (strain ATCC BAA-611 / 2603 V/R)).